The following is a 452-amino-acid chain: Probable multidrug resistance protein NorM (452 aa).

12 consecutive transmembrane segments (helical) span residues arginine 12–leucine 34, glycine 49–valine 71, valine 91–isoleucine 113, valine 128–methionine 150, valine 162–glycine 184, alanine 194–histidine 216, glycine 245–serine 267, asparagine 282–phenylalanine 304, tyrosine 317–phenylalanine 339, aspartate 359–leucine 381, asparagine 388–glycine 410, and phenylalanine 415–phenylalanine 437.

This sequence belongs to the multi antimicrobial extrusion (MATE) (TC 2.A.66.1) family.

The protein localises to the cell membrane. Functionally, multidrug efflux pump. The polypeptide is Probable multidrug resistance protein NorM (norM) (Bacillus licheniformis (strain ATCC 14580 / DSM 13 / JCM 2505 / CCUG 7422 / NBRC 12200 / NCIMB 9375 / NCTC 10341 / NRRL NRS-1264 / Gibson 46)).